The following is a 967-amino-acid chain: Isoleucine--tRNA ligase (967 aa).

Positions 64-74 (PYANGNIHIGH) match the 'HIGH' region motif. Glu600 contributes to the L-isoleucyl-5'-AMP binding site. The 'KMSKS' region signature appears at 641–645 (KQSKS). Lys644 contacts ATP.

This sequence belongs to the class-I aminoacyl-tRNA synthetase family. IleS type 1 subfamily. Monomer.

Its subcellular location is the cytoplasm. It carries out the reaction tRNA(Ile) + L-isoleucine + ATP = L-isoleucyl-tRNA(Ile) + AMP + diphosphate. In terms of biological role, catalyzes the attachment of isoleucine to tRNA(Ile). As IleRS can inadvertently accommodate and process structurally similar amino acids such as valine, to avoid such errors it has two additional distinct tRNA(Ile)-dependent editing activities. One activity is designated as 'pretransfer' editing and involves the hydrolysis of activated Val-AMP. The other activity is designated 'posttransfer' editing and involves deacylation of mischarged Val-tRNA(Ile). The chain is Isoleucine--tRNA ligase from Agrobacterium fabrum (strain C58 / ATCC 33970) (Agrobacterium tumefaciens (strain C58)).